We begin with the raw amino-acid sequence, 125 residues long: MADEELEALRRQRLAELQAKHGDPGDAAQQEAKHREAEMRNSILAQVLDQSARARLSNLALVKPEKTKAVENYLIQMARYGQLSEKVSEQGLIEILKKVSQQTEKTTTVKFNRRKVMDSDEDDDY.

The residue at position 2 (alanine 2) is an N-acetylalanine. The tract at residues 16 to 36 is disordered; the sequence is ELQAKHGDPGDAAQQEAKHRE. Serine 51 carries the post-translational modification Phosphoserine. Lysine 63 is subject to N6-acetyllysine. Position 119 is a phosphoserine (serine 119).

The protein belongs to the PDCD5 family. In terms of tissue distribution, widely expressed. Highest levels in heart, testis, kidney, pituitary gland, adrenal gland and placenta.

In terms of biological role, may function in the process of apoptosis. This chain is Programmed cell death protein 5 (PDCD5), found in Homo sapiens (Human).